Consider the following 791-residue polypeptide: Organellar oligopeptidase A, chloroplastic/mitochondrial (791 aa).

The transit peptide at methionine 1–alanine 82 directs the protein to the chloroplast and mitochondrion. 2 coiled-coil regions span residues arginine 118–serine 138 and aspartate 239–lysine 259. A Zn(2+)-binding site is contributed by histidine 571. Glutamate 572 is a catalytic residue. Zn(2+)-binding residues include histidine 575 and glutamate 601. Histidine 703–tyrosine 709 lines the substrate pocket.

The protein belongs to the peptidase M3 family. The cofactor is Zn(2+).

It is found in the mitochondrion matrix. It localises to the plastid. The protein localises to the chloroplast stroma. It catalyses the reaction Hydrolysis of oligopeptides, with broad specificity. Gly or Ala commonly occur as P1 or P1' residues, but more distant residues are also important, as is shown by the fact that Z-Gly-Pro-Gly-|-Gly-Pro-Ala is cleaved, but not Z-(Gly)(5).. With respect to regulation, inhibited by salicylic acid. Its function is as follows. Oligopeptidase degrading short peptides from 8 to 23 amino acid residues. Plays a role in the degradation of transit peptides and of peptides derived from other proteolytic events. Does not exhibit a strict cleavage pattern. Binds salicylic acid. This Arabidopsis thaliana (Mouse-ear cress) protein is Organellar oligopeptidase A, chloroplastic/mitochondrial.